Consider the following 280-residue polypeptide: Bifunctional protein FolD (280 aa).

Residues 164-166 (GRS), serine 189, and valine 230 contribute to the NADP(+) site.

This sequence belongs to the tetrahydrofolate dehydrogenase/cyclohydrolase family. Homodimer.

It carries out the reaction (6R)-5,10-methylene-5,6,7,8-tetrahydrofolate + NADP(+) = (6R)-5,10-methenyltetrahydrofolate + NADPH. The catalysed reaction is (6R)-5,10-methenyltetrahydrofolate + H2O = (6R)-10-formyltetrahydrofolate + H(+). It functions in the pathway one-carbon metabolism; tetrahydrofolate interconversion. Its function is as follows. Catalyzes the oxidation of 5,10-methylenetetrahydrofolate to 5,10-methenyltetrahydrofolate and then the hydrolysis of 5,10-methenyltetrahydrofolate to 10-formyltetrahydrofolate. This is Bifunctional protein FolD from Geotalea uraniireducens (strain Rf4) (Geobacter uraniireducens).